The following is a 170-amino-acid chain: Ribosome maturation factor RimM (170 aa).

Positions 98-170 (PDEYYWVDLE…LIVVDWDPDF (73 aa)) constitute a PRC barrel domain.

This sequence belongs to the RimM family. In terms of assembly, binds ribosomal protein uS19.

The protein localises to the cytoplasm. An accessory protein needed during the final step in the assembly of 30S ribosomal subunit, possibly for assembly of the head region. Essential for efficient processing of 16S rRNA. May be needed both before and after RbfA during the maturation of 16S rRNA. It has affinity for free ribosomal 30S subunits but not for 70S ribosomes. The protein is Ribosome maturation factor RimM of Xanthomonas axonopodis pv. citri (strain 306).